The primary structure comprises 229 residues: Enolase-phosphatase E1 (229 aa).

Belongs to the HAD-like hydrolase superfamily. MasA/MtnC family. In terms of assembly, monomer. Requires Mg(2+) as cofactor.

It catalyses the reaction 5-methylsulfanyl-2,3-dioxopentyl phosphate + H2O = 1,2-dihydroxy-5-(methylsulfanyl)pent-1-en-3-one + phosphate. It participates in amino-acid biosynthesis; L-methionine biosynthesis via salvage pathway; L-methionine from S-methyl-5-thio-alpha-D-ribose 1-phosphate: step 3/6. It functions in the pathway amino-acid biosynthesis; L-methionine biosynthesis via salvage pathway; L-methionine from S-methyl-5-thio-alpha-D-ribose 1-phosphate: step 4/6. Its function is as follows. Bifunctional enzyme that catalyzes the enolization of 2,3-diketo-5-methylthiopentyl-1-phosphate (DK-MTP-1-P) into the intermediate 2-hydroxy-3-keto-5-methylthiopentenyl-1-phosphate (HK-MTPenyl-1-P), which is then dephosphorylated to form the acireductone 1,2-dihydroxy-3-keto-5-methylthiopentene (DHK-MTPene). This is Enolase-phosphatase E1 from Yersinia pestis (strain Pestoides F).